Here is a 61-residue protein sequence, read N- to C-terminus: Beta-toxin Tce4 (61 aa).

In terms of domain architecture, LCN-type CS-alpha/beta spans 1-61 (KEGYLMDHEG…KVWEYATNRC (61 aa)). Intrachain disulfides connect Cys11/Cys61, Cys15/Cys37, Cys23/Cys42, and Cys27/Cys44. Cys61 carries the cysteine amide modification.

This sequence belongs to the long (4 C-C) scorpion toxin superfamily. Sodium channel inhibitor family. Beta subfamily. In terms of tissue distribution, expressed by the venom gland.

It is found in the secreted. Its function is as follows. Beta toxins bind voltage-independently at site-4 of sodium channels (Nav) and shift the voltage of activation toward more negative potentials thereby affecting sodium channel activation and promoting spontaneous and repetitive firing. The chain is Beta-toxin Tce4 from Tityus cerroazul (Scorpion).